We begin with the raw amino-acid sequence, 110 residues long: Phosphoribosyl-AMP cyclohydrolase (110 aa).

D74 is a Mg(2+) binding site. Residue C75 participates in Zn(2+) binding. Residues D76 and D78 each coordinate Mg(2+). Zn(2+) is bound by residues C91 and C98.

The protein belongs to the PRA-CH family. As to quaternary structure, homodimer. Mg(2+) serves as cofactor. Requires Zn(2+) as cofactor.

The protein localises to the cytoplasm. It carries out the reaction 1-(5-phospho-beta-D-ribosyl)-5'-AMP + H2O = 1-(5-phospho-beta-D-ribosyl)-5-[(5-phospho-beta-D-ribosylamino)methylideneamino]imidazole-4-carboxamide. The protein operates within amino-acid biosynthesis; L-histidine biosynthesis; L-histidine from 5-phospho-alpha-D-ribose 1-diphosphate: step 3/9. Its function is as follows. Catalyzes the hydrolysis of the adenine ring of phosphoribosyl-AMP. In Lacticaseibacillus casei (strain BL23) (Lactobacillus casei), this protein is Phosphoribosyl-AMP cyclohydrolase.